The sequence spans 253 residues: Prolactin-7A2 (253 aa).

The signal sequence occupies residues 1 to 30 (MSFSFSQPCPSGALLLVVVSSLLLWENVAS). N36, N103, and N135 each carry an N-linked (GlcNAc...) asparagine glycan. Disulfide bonds link C101/C218 and C235/C244.

It belongs to the somatotropin/prolactin family. Expression restricted to the placental tissue. Expressed only in the spongiotrophoblasts.

The protein localises to the secreted. The chain is Prolactin-7A2 (Prl7a2) from Mus musculus (Mouse).